The chain runs to 373 residues: ATP phosphoribosyltransferase regulatory subunit (373 aa).

This sequence belongs to the class-II aminoacyl-tRNA synthetase family. HisZ subfamily. In terms of assembly, heteromultimer composed of HisG and HisZ subunits.

The protein localises to the cytoplasm. It participates in amino-acid biosynthesis; L-histidine biosynthesis; L-histidine from 5-phospho-alpha-D-ribose 1-diphosphate: step 1/9. Functionally, required for the first step of histidine biosynthesis. May allow the feedback regulation of ATP phosphoribosyltransferase activity by histidine. This is ATP phosphoribosyltransferase regulatory subunit from Rhizobium etli (strain ATCC 51251 / DSM 11541 / JCM 21823 / NBRC 15573 / CFN 42).